The sequence spans 874 residues: Alanine--tRNA ligase (874 aa).

Residues His-562, His-566, Cys-664, and His-668 each coordinate Zn(2+).

It belongs to the class-II aminoacyl-tRNA synthetase family. Requires Zn(2+) as cofactor.

Its subcellular location is the cytoplasm. The enzyme catalyses tRNA(Ala) + L-alanine + ATP = L-alanyl-tRNA(Ala) + AMP + diphosphate. Catalyzes the attachment of alanine to tRNA(Ala) in a two-step reaction: alanine is first activated by ATP to form Ala-AMP and then transferred to the acceptor end of tRNA(Ala). Also edits incorrectly charged Ser-tRNA(Ala) and Gly-tRNA(Ala) via its editing domain. In Neisseria meningitidis serogroup C / serotype 2a (strain ATCC 700532 / DSM 15464 / FAM18), this protein is Alanine--tRNA ligase.